A 264-amino-acid chain; its full sequence is Sororin (264 aa).

The segment at 1-45 (MAERRTRSGGAAQRSGPRTSLTKPSKSSKRKSGSDLPNSFSEIWP) is disordered. A phosphoserine mark is found at serine 20, serine 32, serine 34, serine 78, and serine 82. Positions 87–89 (KEN) match the KEN box motif. Threonine 97 is modified (phosphothreonine). Position 106 is a phosphoserine (serine 106). Phosphothreonine is present on residues threonine 110, threonine 114, and threonine 159. Positions 166-168 (FGF) match the FGF motif motif. Position 222 is a phosphoserine (serine 222). Residues 242 to 264 (LDKWAVAMNAEFEAAEQFELLIE) are C-terminal Sororin domain.

This sequence belongs to the sororin family. Interacts with the APC/C complex. Interacts with the chromatin-bound cohesin complex; the interaction is indirect, occurs after DNA replication and requires acetylation of the cohesin component SMC3. Interacts (via the FGF motif) with PDS5A and PDS5B; the interaction is direct and prevents the interaction of PDS5A with WAPL. Post-translationally, phosphorylated. Phosphorylation, as cells enter mitosis, disrupts the interaction with PDS5A and relieves the inhibition of WAPL by CDCA5. In terms of processing, ubiquitinated by the APC/C complex in G1, leading to its degradation.

The protein localises to the nucleus. The protein resides in the chromosome. It is found in the cytoplasm. Regulator of sister chromatid cohesion in mitosis stabilizing cohesin complex association with chromatin. May antagonize the action of WAPL which stimulates cohesin dissociation from chromatin. Cohesion ensures that chromosome partitioning is accurate in both meiotic and mitotic cells and plays an important role in DNA repair. Required for efficient DNA double-stranded break repair. The protein is Sororin (Cdca5) of Mus musculus (Mouse).